The primary structure comprises 2067 residues: Nuclear receptor coactivator 6 (2067 aa).

Positions 1-932 are TBP/GTF2A-binding region; sequence MVLDDLPNFE…PPRKKKNCHQ (932 aa). A CREBBP-binding region region spans residues 1-1060; sequence MVLDDLPNFE…LPVSQNVHPP (1060 aa). The segment at 1-1314 is NCOA1-binding region; it reads MVLDDLPNFE…QAHKLDSVVV (1314 aa). Arg-95 is modified (asymmetric dimethylarginine). Disordered regions lie at residues 181 to 253 and 293 to 548; these read AVMT…RQMN and TRPL…PGNS. Positions 293-304 are enriched in low complexity; the sequence is TRPLQQHQQQPQ. Polar residues-rich tracts occupy residues 338 to 347, 357 to 372, 383 to 405, 421 to 457, 465 to 506, and 526 to 548; these read SLGTMTTNQG, MQAQ…TVQT, GSQQ…QFTA, PLQQ…QQQM, NPLS…QGPQ, and GQAN…PGNS. Residues 777–931 are NCOA6IP-binding region; the sequence is VNNSPSQVMG…KPPRKKKNCH (155 aa). Ser-888 is subject to Phosphoserine. The LXXLL motif 1 signature appears at 891–895; the sequence is LVNLL. 5 disordered regions span residues 903–1279, 1313–1358, 1424–1481, 1497–1581, and 1769–1822; these read HFGV…QGLN, VVNS…APKL, NIPQ…EENK, QLLD…IPPV, and LNPD…GKGK. Over residues 907–916 the composition is skewed to low complexity; the sequence is NNKQNNTNAN. Residues 917–929 are compositionally biased toward basic residues; the sequence is KPKKKKPPRKKKN. The segment covering 984–996 has biased composition (low complexity); that stretch reads QRPLPQMPPQLMQ. Over residues 999 to 1024 the composition is skewed to pro residues; sequence APPPQPPQQQPQPQLPQQQQPPPPSQ. Low complexity predominate over residues 1025–1044; the sequence is PQSQQQQQQQQMMMMLMMQQ. Arg-1050 and Arg-1061 each carry asymmetric dimethylarginine. Residues 1066 to 1078 show a composition bias toward polar residues; the sequence is PDSQRMPVQQSGN. Position 1099 is an asymmetric dimethylarginine (Arg-1099). The segment covering 1103–1123 has biased composition (polar residues); it reads SVNTPMGSNSRKMVYQENPQN. Low complexity predominate over residues 1124-1137; that stretch reads SSSSPLGEMSSLPE. Polar residues-rich tracts occupy residues 1152 to 1165, 1176 to 1194, and 1205 to 1217; these read NMPS…NQLM, LSAT…SLPS, and APTQ…TPNR. A compositionally biased stretch (pro residues) spans 1222-1235; it reads PYYPQTPNNRPPST. The segment covering 1313–1324 has biased composition (polar residues); that stretch reads VVNSGKQSNPGT. Low complexity predominate over residues 1326–1349; sequence KRASPSNSRRSSPGSSRKTTPSPG. Positions 1424–1435 are enriched in polar residues; sequence NIPQDSDCQNAQ. An LXXLL motif 2 motif is present at residues 1495-1499; sequence LSQLL. A compositionally biased stretch (low complexity) spans 1545-1562; that stretch reads EPSTSLSSPHSSEPCSTL. The EP300/CRSP3-binding region stretch occupies residues 1644-2067; it reads SEGQSAAQSN…AVQSKRRKSK (424 aa). Positions 1775–1805 are enriched in polar residues; sequence SPQTNTSADQSTLPPSQPTTVVSSLLTNSPG. Residues 1806 to 1818 are compositionally biased toward low complexity; that stretch reads SSANRRSPVSSSK. N6-acetyllysine occurs at positions 1822 and 1825. Disordered stretches follow at residues 1840–1911 and 1957–2067; these read GSLE…LPGG and VGSH…RKSK. Positions 1871–1883 are enriched in polar residues; sequence EQCSTELDSKTPT. The span at 1892-1904 shows a compositional bias: low complexity; sequence MTSSPMAPSSTST. A compositionally biased stretch (basic and acidic residues) spans 2005 to 2014; that stretch reads EPKEIVEKSK. Ser-2022 is modified (phosphoserine).

In terms of assembly, monomer and homodimer. Interacts in vitro with the basal transcription factors GTF2A and TBP, suggesting an autonomous transactivation function. Interacts with NCOA1, CRSP3, RBM14, the histone acetyltransferase proteins EP300 and CREBBP, and with methyltransferase proteins NCOA6IP and PRMT2. Interacts with RBM39. Component of the MLL2/3 complex (also named ASCOM complex), at least composed of KMT2D/MLL2 or KMT2C/MLL3, ASH2L, RBBP5, WDR5, NCOA6, DPY30, KDM6A, PAXIP1/PTIP, PAGR1 and alpha- and beta-tubulin. Interacts with ZNF335; may enhance ligand-dependent transcriptional activation by nuclear hormone receptors. Phosphorylated. Widely expressed. High expression in testis and weak expression in small intestine.

It localises to the nucleus. In terms of biological role, nuclear receptor coactivator that directly binds nuclear receptors and stimulates the transcriptional activities in a hormone-dependent fashion. Coactivates expression in an agonist- and AF2-dependent manner. Involved in the coactivation of different nuclear receptors, such as for steroids (GR and ERs), retinoids (RARs and RXRs), thyroid hormone (TRs), vitamin D3 (VDR) and prostanoids (PPARs). Probably functions as a general coactivator, rather than just a nuclear receptor coactivator. May also be involved in the coactivation of the NF-kappa-B pathway. May coactivate expression via a remodeling of chromatin and its interaction with histone acetyltransferase proteins. Involved in placental, cardiac, hepatic and embryonic development. The sequence is that of Nuclear receptor coactivator 6 (Ncoa6) from Mus musculus (Mouse).